The sequence spans 208 residues: Uracil phosphoribosyltransferase (208 aa).

5-phospho-alpha-D-ribose 1-diphosphate is bound by residues Arg78, Arg103, and 130–138 (DPMLATGGS). Residues Ile193 and 198–200 (GDA) contribute to the uracil site. Residue Asp199 participates in 5-phospho-alpha-D-ribose 1-diphosphate binding.

It belongs to the UPRTase family. Requires Mg(2+) as cofactor.

The catalysed reaction is UMP + diphosphate = 5-phospho-alpha-D-ribose 1-diphosphate + uracil. The protein operates within pyrimidine metabolism; UMP biosynthesis via salvage pathway; UMP from uracil: step 1/1. With respect to regulation, allosterically activated by GTP. In terms of biological role, catalyzes the conversion of uracil and 5-phospho-alpha-D-ribose 1-diphosphate (PRPP) to UMP and diphosphate. This chain is Uracil phosphoribosyltransferase, found in Haemophilus ducreyi (strain 35000HP / ATCC 700724).